We begin with the raw amino-acid sequence, 704 residues long: Translin-associated factor X-interacting protein 1 (704 aa).

Positions 1-37 (MANLQERKSFSKPRISIQASGGTPEAKGIEKRKLSQK) are disordered. 2 coiled-coil regions span residues 190 to 230 (EISV…AEEY) and 304 to 342 (RRDLEMQEKTNMELQEQLESLKADYEEVQKEHELLLQLH).

Interacts with TSNAX. As to expression, specifically expressed in testes. Predominantly detected in the post-meiotic stages of germ cells.

The protein localises to the cytoplasm. Its subcellular location is the perinuclear region. In terms of biological role, possible role in spermatogenesis. The sequence is that of Translin-associated factor X-interacting protein 1 from Mus musculus (Mouse).